Reading from the N-terminus, the 1209-residue chain is MVDVNRFKSMQITLASPNKVRSWSYGEVKKPETINYRTLKPEREGLFDEVIFGPTKDWECACGKYKRIRYKGIVCDRCGVEVTRAKVRRERMGHIELKAPVSHIWYFKGIPSRMGLTLDMSPRALEEVIYFAAYVVIDPKETPLEAKSLLTEREYREKLQEYGSGSFIAKMGAEAIQDLLKRVDLDAEIAELKEELKTASGQKRVKAIRRLDVLDAFQKSGNKPEWMVLNILPVIPPDLRPMLQLDGGRFATSDLNDLYRRVINRNNRLARLLELNAPGIIVQNEKRMLQEAVDALIDNGRRGRPITGPGSRPLKSLSQMLKGKQGRFRQNLLGKRVDFSGRSVIAVGPTLKMYQCGVPREMAIELFKPFVMREIVDRDIVQNVKAAKRLIERGDDRIWDILEEVIKEHPVLLNRAPTLHRLGIQAFEPVLIDGKALRLHPLACEAYNADFDGDQMAIHVPLSEEAQAEARLLMLAAEHILNPKDGKPVVTPSQDMVLGNYYLTMEGADREGEGMVFKDRDEAVMAYRNGYVHLHSRVGIAVDSMPNKPWTDEQRHKIMITTVGKILFNDIMPADLPYLQEPNNANLTDKTPDKYFLAPGSNIQEAIKNLDLNIPFKKKNLGNIIAEIFKRFRTTETSAFLDRLKDLGYYHSTLAGLTVGIADIPVIDNKQEIIDAAHHRVEEISKAFRRGLMTDDDRYEAVTATWRDAKEQLEARLVETQDAKNPIVMMMDSGARGNISNFSQLAGMRGLMAAPNGRIMELPILSNFREGLSVLEMFFSTHGARKGMTDTALKTADSGYLTRRLVDVAQDVIIREDDCGTDRGLTITAITDGKEVTETLEERLVGRYTKKSVRHPETGEIIASPDTLITEDMAHYIAEAGVSEVTIRSVFTCNTRHGVCRHCYGINLATGDAVEVGEAVGTIAAQSIGEPGTQLTMRTFHTGGVASNADITQGLPRIQEIFEARNPKGEAVITEVKGQVTDIEEDAATRTKKVYVKGATGEGEYTVPFTARMKVQVGDEVHRGAPLTEGSIQPKHLLEVRDTLSVETYLLAEVQKVYRSQGVEIGDKHVEVMVRQMLRKVRVMDPGDTGLLPGILMDIADFTDANRDIVIAGGIPATSRPVLMGITKASLETNSFLSAASFQETTRVLTDAAIRGKKDHLLGLKENVIIGKIIPAGTGMARYRNLEPLAVNEIEVIEDSEEQEDTVEE.

Zn(2+) contacts are provided by Cys60, Cys62, Cys75, and Cys78. Mg(2+)-binding residues include Asp450, Asp452, and Asp454. Residues Cys819, Cys893, Cys900, and Cys903 each coordinate Zn(2+).

The protein belongs to the RNA polymerase beta' chain family. As to quaternary structure, the RNAP catalytic core consists of 2 alpha, 1 beta, 1 beta' and 1 omega subunit. When a sigma factor is associated with the core the holoenzyme is formed, which can initiate transcription. It depends on Mg(2+) as a cofactor. Requires Zn(2+) as cofactor.

The enzyme catalyses RNA(n) + a ribonucleoside 5'-triphosphate = RNA(n+1) + diphosphate. DNA-dependent RNA polymerase catalyzes the transcription of DNA into RNA using the four ribonucleoside triphosphates as substrates. In Streptococcus mutans serotype c (strain ATCC 700610 / UA159), this protein is DNA-directed RNA polymerase subunit beta'.